Consider the following 1044-residue polypeptide: MASNDLKTWVSDKLMMLLGYSQAAVVNYLIAMAKKTKSPTELVGELVDYGFSSSGDTRSFAEEIFARVPRKTAGVNLYQKHEAEAAMLVRKQKTYALLDADDDEDEVVVEKKSSVSESRKSDKGKKRFRKKSGQSDESDGEVAVREDSRHVRRKVSEEDDGSESEEERVRDQKEREELEQHLKDRDTARTRKLTEQTLSKKEKEEAVRRANALEKDDLYSLRKVSRQEYLKKREQKKLDELRDEIEDEQYLFGGEKLTETELREFRYKKELYDLVKKRTQDEDNVEEYRIPDAYDQEGGVDQEKRFSVAVQRYRDLDSTEKMNPFAEQEAWEDHQIGKATLKFGAKNKQASDDYQFVFEDQINFIKESVMAGENYEDAMDAKQKSQDLAEKTALEELQEVRRSLPIYTYRDQLLKAVEEHQVLVIVGDTGSGKTTQIPQYLHEAGYTKRGKVGCTQPRRVAAMSVAARVAQEMGVKLGHEVGYSIRFEDCTSDKTVLKYMTDGMLLRELLGEPDLASYSVVIVDEAHERTLSTDILFGLVKDIARFRPDLKLLISSATMDAEKFSDYFDTAPIFSFPGRRYPVEINYTSAPEADYMDAAIVTILTIHVREPLGDILVFFTGQEEIETAEEILKHRIRGLGTKIRELIICPIYANLPSELQAKIFEPTPEGARKVVLATNIAETSLTIDGIKYVVDPGFSKMKSYNPRTGMESLLITPISKASATQRAGRAGRTSPGKCYRLYTAFNYNNDLEENTVPEVQRTNLASVVLALKSLGIHDLINFDFMDPPPAEALVKSLELLFALGALNKLGELTKAGRRMAEFPLDPMLSKMIVVSDKYKCSDEIISIAAMLSIGGSIFYRPKDKQVHADNARMNFHTGNVGDHIALLKVYSSWKETNFSTQWCYENYIQVRSMKRARDIRDQLEGLLERVEIDISSNLNELDSVRKSIVAGFFPHTAKLQKNGSYRTVKHPQTVHIHPNSGLSQVLPRWVVYHELVLTSKEYMRQVTELKPEWLIELAPHYYQLKDVEDAASKKMPKGAGKAAM.

Positions 106–206 (EVVVEKKSSV…TLSKKEKEEA (101 aa)) are disordered. The segment covering 108–121 (VVEKKSSVSESRKS) has biased composition (basic and acidic residues). Residues 122–132 (DKGKKRFRKKS) show a composition bias toward basic residues. Phosphoserine occurs at positions 135 and 138. Residues 157 to 166 (EEDDGSESEE) are compositionally biased toward acidic residues. The span at 167 to 206 (ERVRDQKEREELEQHLKDRDTARTRKLTEQTLSKKEKEEA) shows a compositional bias: basic and acidic residues. The 164-residue stretch at 414-577 (LKAVEEHQVL…FDTAPIFSFP (164 aa)) folds into the Helicase ATP-binding domain. An ATP-binding site is contributed by 427-434 (GDTGSGKT). The DEAH box motif lies at 524-527 (DEAH). Residues 600-775 (IVTILTIHVR…SVVLALKSLG (176 aa)) enclose the Helicase C-terminal domain.

Belongs to the DEAD box helicase family. DEAH subfamily. PRP2 sub-subfamily. Widely expressed.

It catalyses the reaction ATP + H2O = ADP + phosphate + H(+). Involved in pre-mRNA splicing. The sequence is that of Pre-mRNA-splicing factor ATP-dependent RNA helicase DEAH1 from Arabidopsis thaliana (Mouse-ear cress).